Consider the following 875-residue polypeptide: Serine/threonine-protein kinase D2 (875 aa).

The tract at residues 1-33 is disordered; that stretch reads MAAAPSHPAGLPCSPGPGSPPPPGGSDLQSLPP. The segment covering 14-24 has biased composition (pro residues); sequence SPGPGSPPPPG. Phosphoserine occurs at positions 26 and 30. The residue at position 87 (Tyr87) is a Phosphotyrosine. A Phorbol-ester/DAG-type 1 zinc finger spans residues 138-188; that stretch reads PHALTVHSYRAPAFCDHCGEMLFGLVRQGLKCDGCGLNYHKRCAFSIPNNC. Phosphoserine is present on residues Ser197, Ser198, Ser200, Ser203, Ser206, Ser211, Ser212, and Ser214. The segment at 224–247 is disordered; the sequence is RSTTDLLPRRPPSSSSSSSSSSFY. Low complexity predominate over residues 236-245; it reads SSSSSSSSSS. Phosphoserine; by CSNK1D and CSNK1E is present on Ser244. Ser245 carries the phosphoserine modification. A Phorbol-ester/DAG-type 2 zinc finger spans residues 265–315; it reads PHTFLIHSYTRPTVCQACKKLLKGLFRQGLQCKDCKFNCHKRCATRVPNDC. The 113-residue stretch at 398–510 folds into the PH domain; the sequence is TTLREGWVVH…WETAIRQALM (113 aa). Tyr408 carries the phosphotyrosine modification. Tyr439 carries the post-translational modification Phosphotyrosine; by ABL1. The residue at position 519 (Ser519) is a Phosphoserine. Residues 552 to 808 form the Protein kinase domain; it reads IFPDEVLGSG…VDKSLSHPWL (257 aa). Residues 558-566 and Lys581 contribute to the ATP site; that span reads LGSGQFGVV. Catalysis depends on Asp675, which acts as the Proton acceptor. Ser707 bears the Phosphoserine; by PKC mark. Ser711 carries the phosphoserine modification. Tyr718 is subject to Phosphotyrosine; by ABL1. The short motif at 725–727 is the Important for ABL1-mediated Tyr-718 phosphorylation element; it reads LNQ. Ser873 is modified (phosphoserine; by autocatalysis).

The protein belongs to the protein kinase superfamily. CAMK Ser/Thr protein kinase family. PKD subfamily. In terms of assembly, interacts (via C-terminus) with LCK. Interacts (via N-terminus and zing-finger domain 1 and 2) with PRKCD in response to oxidative stress; the interaction is independent of PRKD2 tyrosine phosphorylation. It depends on Mg(2+) as a cofactor. Post-translationally, phosphorylation of Ser-873 correlates with the activation status of the kinase. Ser-707 is probably phosphorylated by PKC. Phosphorylation at Ser-244 by CSNK1D and CSNK1E promotes nuclear localization and substrate targeting. Phosphorylation at Ser-244, Ser-707 and Ser-711 is required for nuclear localization. Phosphorylated at Tyr-438 by ABL1 in response to oxidative stress. Phosphorylated at Tyr-718 by ABL1 specifically in response to oxidative stress; requires prior phosphorylation at Ser-707 or/and Ser-711.

The protein localises to the cytoplasm. Its subcellular location is the cell membrane. It localises to the golgi apparatus. It is found in the trans-Golgi network. The catalysed reaction is L-seryl-[protein] + ATP = O-phospho-L-seryl-[protein] + ADP + H(+). It carries out the reaction L-threonyl-[protein] + ATP = O-phospho-L-threonyl-[protein] + ADP + H(+). With respect to regulation, activated by DAG and phorbol esters. Phorbol-ester/DAG-type domains bind DAG, mediating translocation to membranes. Autophosphorylation of Ser-711 and phosphorylation of Ser-707 by PKC relieves auto-inhibition by the PH domain. Catalytic activity is further increased by phosphorylation at Tyr-718 in response to oxidative stress. Functionally, serine/threonine-protein kinase that converts transient diacylglycerol (DAG) signals into prolonged physiological effects downstream of PKC, and is involved in the regulation of cell proliferation via MAPK1/3 (ERK1/2) signaling, oxidative stress-induced NF-kappa-B activation, inhibition of HDAC7 transcriptional repression, signaling downstream of T-cell antigen receptor (TCR) and cytokine production, and plays a role in Golgi membrane trafficking, angiogenesis, secretory granule release and cell adhesion. May potentiate mitogenesis induced by the neuropeptide bombesin by mediating an increase in the duration of MAPK1/3 (ERK1/2) signaling, which leads to accumulation of immediate-early gene products including FOS that stimulate cell cycle progression. In response to oxidative stress, is phosphorylated at Tyr-438 and Tyr-718 by ABL1, which leads to the activation of PRKD2 without increasing its catalytic activity, and mediates activation of NF-kappa-B. In response to the activation of the gastrin receptor CCKBR, is phosphorylated at Ser-244 by CSNK1D and CSNK1E, translocates to the nucleus, phosphorylates HDAC7, leading to nuclear export of HDAC7 and inhibition of HDAC7 transcriptional repression of NR4A1/NUR77. Upon TCR stimulation, is activated independently of ZAP70, translocates from the cytoplasm to the nucleus and is required for interleukin-2 (IL2) promoter up-regulation. During adaptive immune responses, is required in peripheral T-lymphocytes for the production of the effector cytokines IL2 and IFNG after TCR engagement and for optimal induction of antibody responses to antigens. In epithelial cells stimulated with lysophosphatidic acid (LPA), is activated through a PKC-dependent pathway and mediates LPA-stimulated interleukin-8 (IL8) secretion via a NF-kappa-B-dependent pathway. During TCR-induced T-cell activation, interacts with and is activated by the tyrosine kinase LCK, which results in the activation of the NFAT transcription factors. In the trans-Golgi network (TGN), regulates the fission of transport vesicles that are on their way to the plasma membrane and in polarized cells is involved in the transport of proteins from the TGN to the basolateral membrane. Plays an important role in endothelial cell proliferation and migration prior to angiogenesis, partly through modulation of the expression of KDR/VEGFR2 and FGFR1, two key growth factor receptors involved in angiogenesis. In secretory pathway, is required for the release of chromogranin-A (CHGA)-containing secretory granules from the TGN. Downstream of PRKCA, plays important roles in angiotensin-2-induced monocyte adhesion to endothelial cells. The polypeptide is Serine/threonine-protein kinase D2 (Prkd2) (Rattus norvegicus (Rat)).